The following is a 509-amino-acid chain: tRNA-2-methylthio-N(6)-dimethylallyladenosine synthase (509 aa).

A disordered region spans residues 1 to 21 (MNEKQKLESGQVHPSDKKSEK). One can recognise an MTTase N-terminal domain in the interval 66 to 184 (RKFYIRTYGC…LPELLSEAYL (119 aa)). [4Fe-4S] cluster is bound by residues Cys75, Cys111, Cys145, Cys221, Cys225, and Cys228. Residues 207–437 (RNGKIKGWVN…NALVNEISAK (231 aa)) enclose the Radical SAM core domain. Residues 440-503 (KEYEGKVVEV…TWSLDGEMVG (64 aa)) enclose the TRAM domain.

The protein belongs to the methylthiotransferase family. MiaB subfamily. As to quaternary structure, monomer. [4Fe-4S] cluster serves as cofactor.

The protein localises to the cytoplasm. The catalysed reaction is N(6)-dimethylallyladenosine(37) in tRNA + (sulfur carrier)-SH + AH2 + 2 S-adenosyl-L-methionine = 2-methylsulfanyl-N(6)-dimethylallyladenosine(37) in tRNA + (sulfur carrier)-H + 5'-deoxyadenosine + L-methionine + A + S-adenosyl-L-homocysteine + 2 H(+). It catalyses the reaction N(6)-dimethylallyladenosine(37) in tRNA + (sulfur carrier)-SH + AH2 + S-adenosyl-L-methionine = 2-thio-N(6)-dimethylallyladenosine(37) in tRNA + (sulfur carrier)-H + 5'-deoxyadenosine + L-methionine + A + H(+). The enzyme catalyses 2-thio-N(6)-dimethylallyladenosine(37) in tRNA + S-adenosyl-L-methionine = 2-methylsulfanyl-N(6)-dimethylallyladenosine(37) in tRNA + S-adenosyl-L-homocysteine + H(+). Functionally, catalyzes the methylthiolation of N6-(dimethylallyl)adenosine (i(6)A), leading to the formation of 2-methylthio-N6-(dimethylallyl)adenosine (ms(2)i(6)A) at position 37 in tRNAs that read codons beginning with uridine. This chain is tRNA-2-methylthio-N(6)-dimethylallyladenosine synthase, found in Bacillus subtilis (strain 168).